The sequence spans 329 residues: Flotillin-like protein FloA (329 aa).

The next 2 membrane-spanning stretches (helical) occupy residues 6–26 (FIVIAVIIIVALLILFSFVPI) and 27–47 (GLWISALAAGVHVGIGTLVGM).

This sequence belongs to the flotillin-like FloA family. In terms of assembly, homooligomerizes.

It localises to the cell membrane. It is found in the membrane raft. Found in functional membrane microdomains (FMM) that may be equivalent to eukaryotic membrane rafts. FMMs are highly dynamic and increase in number as cells age. Flotillins are thought to be important factors in membrane fluidity. The chain is Flotillin-like protein FloA from Staphylococcus aureus (strain JH1).